The primary structure comprises 770 residues: Signal transducer and activator of transcription 3 (770 aa).

The residue at position 2 (alanine 2) is an N-acetylalanine. Residues lysine 49 and lysine 87 each carry the N6-acetyllysine modification. An Essential for nuclear import motif is present at residues 150–162 (DVRKRVQDLEQKM). In terms of domain architecture, SH2 spans 580–670 (WNEGYIMGFI…DATNILVSPL (91 aa)). 3 positions are modified to allysine; alternate: lysine 601, lysine 615, and lysine 631. 3 positions are modified to N6-acetyllysine; alternate: lysine 601, lysine 615, and lysine 631. Tyrosine 640 is modified (phosphotyrosine; by TYK2). Lysine 685 carries the allysine; alternate modification. Lysine 685 bears the N6-acetyllysine; alternate mark. At tyrosine 705 the chain carries Phosphotyrosine; by FER and PTK6. The residue at position 707 (lysine 707) is an N6-acetyllysine. Threonine 714 carries the phosphothreonine modification. Serine 727 carries the post-translational modification Phosphoserine; by DYRK2, NLK, NEK6, IRAK1, RPS6KA5, ZIPK/DAPK3 and PKC/PRKCE.

The protein belongs to the transcription factor STAT family. Forms a homodimer or a heterodimer with a related family member (at least STAT1). Component of a promoter-binding complex composed of STAT3, NFATC3 and NFATC4; complex formation is enhanced by calcineurin. Interacts with IL31RA, NCOA1, PELP1, SIPAR, SOCS7, STATIP1 and TMF1. Interacts with IL23R in presence of IL23. Interacts (via SH2 domain) with NLK. Interacts with ARL2BP; the interaction is enhanced by LIF and JAK1 expression. Interacts with KPNA4 and KPNA5; KPNA4 may be the primary mediator of nuclear import. Interacts with CAV2; the interaction is increased on insulin-induced tyrosine phosphorylation of CAV2 and leads to STAT3 activation. Interacts with ARL2BP; interaction is enhanced with ARL2. Interacts with NEK6. Binds to CDK9 when activated and nuclear. Interacts with BMX. Interacts with ZIPK/DAPK3. Interacts with PIAS3; the interaction occurs on stimulation by IL6, CNTF or OSM and inhibits the DNA binding activity of STAT3. In prostate cancer cells, interacts with PRKCE and promotes DNA binding activity of STAT3. Interacts with STMN3, antagonizing its microtubule-destabilizing activity. Interacts with the 'Lys-129' acetylated form of BIRC5/survivin. Interacts with FER. Interacts (via SH2 domain) with EIF2AK2/PKR (via the kinase catalytic domain). Interacts with FGFR4. Interacts with INPP5F; the interaction is independent of STAT3 Tyr-705 phosphorylation status. Interacts with OCIAD1 and OCIAD2. Interacts (unphosphorylated or phosphorylated at Ser-727) with PHB1. Interacts and may form heterodimers with NHLH1. Found in a complex with SLC39A6, SLC39A10 and with the 'Ser-727' phosphorylated form of STAT3 throughout mitosis. Interacts (when acetylated) with EP300 (via bromo domain); interaction takes place following STAT3 acetylation by EP300 and promotes enhanceosome assembly. Interacts (when acetylated) with BRD2 (via bromo domain); interaction promotes STAT3 recruitment to chromatin and T-helper Th17 cell differentiation. Interacts with FAM220A/SIPAR; the interaction occurs in both the nucleus and the cytoplasm, is enhanced by IL6 and promotes STAT3 dephosphorylation. Interacts in both unphosphorylated and phosphorylated forms with FAM220A but interacts preferentially in the phosphorylated form in the nucleus. Interacts with PTPN2; the interaction is promoted by FAM220A and leads to STAT3 dephosphorylation which negatively regulates STAT3 transcriptional activator activity. In terms of processing, activated through tyrosine phosphorylation by BMX. Tyrosine phosphorylated in response to IL6, IL11, CNTF, LIF, KITLG/SCF, CSF1, EGF, PDGF, IFN-alpha and OSM. Activated KIT promotes phosphorylation on tyrosine residues and subsequent translocation to the nucleus. Tyrosine phosphorylated in response to constitutively activated FGFR1, FGFR2, FGFR3 and FGFR4. Phosphorylated on serine upon DNA damage, probably by ATM or ATR. Serine phosphorylation is important for the formation of stable DNA-binding STAT3 homodimers and maximal transcriptional activity. ARL2BP may participate in keeping the phosphorylated state of STAT3 within the nucleus. Tyrosine phosphorylated upon stimulation with EGF. Upon LPS challenge, phosphorylated within the nucleus by IRAK1. Phosphorylated on Ser-727 by RPS6KA5. Dephosphorylation on tyrosine residues by PTPN2 negatively regulates IL6/interleukin-6 signaling. Phosphorylation at Tyr-705 by FER, isoform M2 of PKM (PKM2) or PTK6 leads to an increase of its transcriptional activity. Phosphorylation at Tyr-705 is increased in the presence of calcineurin. Phosphorylation at Tyr-640 by TYK2 negatively regulates transcriptional activity. Acetylated on lysine residues by EP300/p300, promoting its activation. Acetylation at Lys-49 and Lys-87 by EP300/p300 promotes its activation. Acetylation at Lys-87 by EP300/p300 promotes its association with BRD2 and recruitment to chromatin. Deacetylated at Lys-49 and Lys-87 by HDAC1. Acetylation at Lys-685 by EP300/p300 promotes its homodimerization and activation. Deacetylated at Lys-685 by HDAC3. Acetylated on lysine residues by CREBBP. Deacetylation by LOXL3 leads to disrupt STAT3 dimerization and inhibit STAT3 transcription activity. Oxidation of lysine residues to allysine on STAT3 preferentially takes place on lysine residues that are acetylated. Post-translationally, some lysine residues are oxidized to allysine by LOXL3, leading to disrupt STAT3 dimerization and inhibit STAT3 transcription activity. Oxidation of lysine residues to allysine on STAT3 preferentially takes place on lysine residues that are acetylated. As to expression, detected in lung, heart, oviduct, ovary, uterus and kidney (at protein level). Expressed in cardiomyocytes (at protein level). Detected in ovary, oviduct, and at lower levels in uterus and lung.

It is found in the cytoplasm. It localises to the nucleus. Its function is as follows. Signal transducer and transcription activator that mediates cellular responses to interleukins, KITLG/SCF, LEP and other growth factors. Once activated, recruits coactivators, such as NCOA1 or MED1, to the promoter region of the target gene. May mediate cellular responses to activated FGFR1, FGFR2, FGFR3 and FGFR4. Upon activation of IL6ST/gp130 signaling by interleukin-6 (IL6), binds to the IL6-responsive elements identified in the promoters of various acute-phase protein genes. Activated by IL31 through IL31RA. Acts as a regulator of inflammatory response by regulating differentiation of naive CD4(+) T-cells into T-helper Th17 or regulatory T-cells (Treg): acetylation promotes its transcription activity and cell differentiation while deacetylation and oxidation of lysine residues by LOXL3 inhibits differentiation. Involved in cell cycle regulation by inducing the expression of key genes for the progression from G1 to S phase, such as CCND1. Mediates the effects of LEP on melanocortin production, body energy homeostasis and lactation. May play an apoptotic role by transctivating BIRC5 expression under LEP activation. Cytoplasmic STAT3 represses macroautophagy by inhibiting EIF2AK2/PKR activity. Plays a crucial role in basal beta cell functions, such as regulation of insulin secretion. Following JAK/STAT signaling activation and as part of a complex with NFATC3 and NFATC4, binds to the alpha-beta E4 promoter region of CRYAB and activates transcription in cardiomyocytes. Plays an important role in host defense in methicillin-resistant S.aureus lung infection by regulating the expression of the antimicrobial lectin REG3G. The protein is Signal transducer and activator of transcription 3 (Stat3) of Rattus norvegicus (Rat).